A 143-amino-acid chain; its full sequence is Boletus edulis lectin (143 aa).

Beta-D-Gal-(1-&gt;3)-alpha-D-GalNAc is bound by residues Ala30, 49–50, and 72–73; these read SG and HN. Residues 49–50 and 72–73 each bind N-acetyl-alpha-D-galactosamine; these read SG and HN. N,N'-diacetylchitobiose-binding positions include 79–82, Arg103, and Tyr114; that span reads DVVT. Residues 79–82, Arg103, and Tyr114 each bind N-acetyl-alpha-D-glucosamine; that span reads DVVT.

Belongs to the fungal fruit body lectin family. Homotetramer.

In terms of biological role, lectin that recognizes O-linked galactose-beta-1,3-N-acetylgalactosamine, a disaccharide (Thomsen-Friedenreich antigen or T-disaccharide), present on cell surface glycoproteins. Can also bind chitin, N,N'-diacetylchitobiose, N-acetylgalactosamine and N-acetylglucosamine. Inhibits proliferation of colon, breast and liver cancer cell lines (in vitro). This is Boletus edulis lectin from Boletus edulis (King bolete).